Here is a 156-residue protein sequence, read N- to C-terminus: SsrA-binding protein (156 aa).

Belongs to the SmpB family.

Its subcellular location is the cytoplasm. In terms of biological role, required for rescue of stalled ribosomes mediated by trans-translation. Binds to transfer-messenger RNA (tmRNA), required for stable association of tmRNA with ribosomes. tmRNA and SmpB together mimic tRNA shape, replacing the anticodon stem-loop with SmpB. tmRNA is encoded by the ssrA gene; the 2 termini fold to resemble tRNA(Ala) and it encodes a 'tag peptide', a short internal open reading frame. During trans-translation Ala-aminoacylated tmRNA acts like a tRNA, entering the A-site of stalled ribosomes, displacing the stalled mRNA. The ribosome then switches to translate the ORF on the tmRNA; the nascent peptide is terminated with the 'tag peptide' encoded by the tmRNA and targeted for degradation. The ribosome is freed to recommence translation, which seems to be the essential function of trans-translation. The polypeptide is SsrA-binding protein (Clostridium perfringens (strain 13 / Type A)).